A 396-amino-acid polypeptide reads, in one-letter code: MSTTVTVLTDTWSRRAKRLEGDAKILAIGTATPASWVDQTTYPDFYFRITNSQHLLEHKEKFRRICNKSKIRKRHLVLTEELLKKNPNLCTYNETSLNTRQDILVSEVPKLGKEAAMKAIKEWGRPISEITHLVFCTTSGVDMPGADFQLTKLLGLNSSVKRLMMYQQGCNAGAAMLRLAKDLAESNKGGRVLVVCAEITINIFRGPSLEQDDNLLAQCLFGDGAAAMIVAADPRPGLETPLFELVSSAQTIVPNTDSHLKLHLREMGLTFHCSKAVPSVLAENVEDCLVKAFEPYGISDWNSIFWVFHPGGNAIVDRVEERLGLGPEKLRASRDVLSEYGNLTSACVLFILDEMRKKSKKDEQMTTGEGLEWGVVFGFGPGLTIDTIIIRSVPIN.

Cysteine 170 is an active-site residue.

The protein belongs to the thiolase-like superfamily. Chalcone/stilbene synthases family.

It carries out the reaction (E)-4-coumaroyl-CoA + 3 malonyl-CoA + 3 H(+) = 2',4,4',6'-tetrahydroxychalcone + 3 CO2 + 4 CoA. Its pathway is secondary metabolite biosynthesis; flavonoid biosynthesis. Its function is as follows. The primary product of this enzyme is 4,2',4',6'-tetrahydroxychalcone (also termed naringenin-chalcone or chalcone) which can under specific conditions spontaneously isomerize into naringenin. The polypeptide is Chalcone synthase B (CHSB) (Ipomoea purpurea (Common morning glory)).